A 77-amino-acid chain; its full sequence is Large ribosomal subunit protein bL28 (77 aa).

The disordered stretch occupies residues 1 to 20 (MSRVCQVTGKGPVTGNNISH).

It belongs to the bacterial ribosomal protein bL28 family.

The protein is Large ribosomal subunit protein bL28 of Pseudomonas fluorescens (strain Pf0-1).